The sequence spans 370 residues: MMQSSLARPLPRPPIRPACGNPVCRSRPGSVSVARCRAEAAPPAPAPAARRAAGPYTGRDPEVKKPAWLRQRAAQGEKYARLRESIGELKLNTVCVEAQCPNIGECWNGGGGAGGEGDGIATATIMVLGDTCTRGCRFCAVKTSNKPPPPDPLEPLNTALAVASWGVDYVVLTSVDRDDLPDGGSSHFAQTVRALKELKPGILVECLTSDFRGDLEAVSALANSGLDVFAHNIETVRSLQRIVRDPRAGYDQSLAVLKHAKSCKEGMITKSSIMLGLGETDEEVKQAMIDLRAIGVDILTLGQYLQPTERHLTVREYVTPEKFQFWKEYGESVGFRYVASGPLVRSSYRAGELFVQNLVRNNKPKLPASS.

Disordered regions lie at residues Met-1 to Arg-25 and Glu-39 to Ala-67. The N-terminal 37 residues, Met-1 to Arg-37, are a transit peptide targeting the chloroplast. [4Fe-4S] cluster contacts are provided by Cys-95, Cys-100, Cys-106, Cys-132, Cys-136, Cys-139, and Ser-347. Residues Gly-115–Arg-336 enclose the Radical SAM core domain.

The protein belongs to the radical SAM superfamily. Lipoyl synthase family. The cofactor is [4Fe-4S] cluster.

It is found in the plastid. It localises to the chloroplast. The catalysed reaction is [[Fe-S] cluster scaffold protein carrying a second [4Fe-4S](2+) cluster] + N(6)-octanoyl-L-lysyl-[protein] + 2 oxidized [2Fe-2S]-[ferredoxin] + 2 S-adenosyl-L-methionine + 4 H(+) = [[Fe-S] cluster scaffold protein] + N(6)-[(R)-dihydrolipoyl]-L-lysyl-[protein] + 4 Fe(3+) + 2 hydrogen sulfide + 2 5'-deoxyadenosine + 2 L-methionine + 2 reduced [2Fe-2S]-[ferredoxin]. Its pathway is protein modification; protein lipoylation via endogenous pathway; protein N(6)-(lipoyl)lysine from octanoyl-[acyl-carrier-protein]: step 2/2. Catalyzes the radical-mediated insertion of two sulfur atoms into the C-6 and C-8 positions of the octanoyl moiety bound to the lipoyl domains of lipoate-dependent enzymes, thereby converting the octanoylated domains into lipoylated derivatives. This is Lipoyl synthase 1, chloroplastic from Oryza sativa subsp. indica (Rice).